We begin with the raw amino-acid sequence, 209 residues long: Autophagy-related protein 29 (209 aa).

S104 bears the Phosphoserine mark. A disordered region spans residues 156–198 (NIHKKTSDSENKPNDKLDKDGINKEMECGSSDDDLSSSLSVSK). Residues 160–182 (KTSDSENKPNDKLDKDGINKEME) show a composition bias toward basic and acidic residues. Phosphoserine occurs at positions 185 and 186.

It belongs to the ATG29 family. Forms a stable complex with ATG17 and ATG31. Interacts directly with ATG31. The ATG17-ATG29-ATG31 complex interacts with the ATG1-ATG13 complex. Note=The interaction with the ATG1-ATG13 complex is induced by starvation.

The protein resides in the preautophagosomal structure. Plays a role in autophagy. Functions at the preautophagosomal structure (PAS) in order to form normal autophagosomes under starvation conditions. Also plays a role in mitophagy and regulation of filamentous growth. This chain is Autophagy-related protein 29 (ATG29), found in Saccharomyces cerevisiae (strain YJM789) (Baker's yeast).